The following is a 421-amino-acid chain: Imidazolonepropionase (421 aa).

Fe(3+)-binding residues include H81 and H83. Zn(2+) contacts are provided by H81 and H83. 3 residues coordinate 4-imidazolone-5-propanoate: R90, Y153, and H186. Y153 lines the N-formimidoyl-L-glutamate pocket. Position 251 (H251) interacts with Fe(3+). H251 is a binding site for Zn(2+). E254 contributes to the 4-imidazolone-5-propanoate binding site. Residue D326 coordinates Fe(3+). Residue D326 participates in Zn(2+) binding. N328 and G330 together coordinate N-formimidoyl-L-glutamate. A 4-imidazolone-5-propanoate-binding site is contributed by S331.

Belongs to the metallo-dependent hydrolases superfamily. HutI family. Requires Zn(2+) as cofactor. Fe(3+) is required as a cofactor.

Its subcellular location is the cytoplasm. It catalyses the reaction 4-imidazolone-5-propanoate + H2O = N-formimidoyl-L-glutamate. Its pathway is amino-acid degradation; L-histidine degradation into L-glutamate; N-formimidoyl-L-glutamate from L-histidine: step 3/3. In terms of biological role, catalyzes the hydrolytic cleavage of the carbon-nitrogen bond in imidazolone-5-propanoate to yield N-formimidoyl-L-glutamate. It is the third step in the universal histidine degradation pathway. In Streptococcus pyogenes serotype M18 (strain MGAS8232), this protein is Imidazolonepropionase.